A 192-amino-acid polypeptide reads, in one-letter code: Lipid A acyltransferase PagP (192 aa).

The signal sequence occupies residues 1–26 (MTVVNKSFLTFLVFFCQILFPLNASA). Residues His-64, Asp-107, and Ser-108 contribute to the active site.

It belongs to the lipid A palmitoyltransferase family. As to quaternary structure, homodimer.

The protein localises to the cell outer membrane. It catalyses the reaction a lipid A + a 1,2-diacyl-sn-glycero-3-phosphocholine = a hepta-acyl lipid A + a 2-acyl-sn-glycero-3-phosphocholine. The enzyme catalyses a lipid IVA + a 1,2-diacyl-sn-glycero-3-phosphocholine = a lipid IVB + a 2-acyl-sn-glycero-3-phosphocholine. It carries out the reaction a lipid IIA + a 1,2-diacyl-sn-glycero-3-phosphocholine = a lipid IIB + a 2-acyl-sn-glycero-3-phosphocholine. Transfers a fatty acid residue from the sn-1 position of a phospholipid to the N-linked hydroxyfatty acid chain on the proximal unit of lipid A or its precursors. This is Lipid A acyltransferase PagP from Cronobacter turicensis (strain DSM 18703 / CCUG 55852 / LMG 23827 / z3032).